The sequence spans 88 residues: Large ribosomal subunit protein bL31B (88 aa).

Belongs to the bacterial ribosomal protein bL31 family. Type B subfamily. As to quaternary structure, part of the 50S ribosomal subunit.

The polypeptide is Large ribosomal subunit protein bL31B (Leuconostoc mesenteroides subsp. mesenteroides (strain ATCC 8293 / DSM 20343 / BCRC 11652 / CCM 1803 / JCM 6124 / NCDO 523 / NBRC 100496 / NCIMB 8023 / NCTC 12954 / NRRL B-1118 / 37Y)).